Reading from the N-terminus, the 341-residue chain is tRNA-specific 2-thiouridylase MnmA (341 aa).

ATP contacts are provided by residues G8–S15 and M34. Residue C94 is the Nucleophile of the active site. An intrachain disulfide couples C94 to C188. Residue G118 coordinates ATP. The interval K136–Q138 is interaction with tRNA. The Cysteine persulfide intermediate role is filled by C188. The interval R290–Y291 is interaction with tRNA.

Belongs to the MnmA/TRMU family.

It localises to the cytoplasm. The enzyme catalyses S-sulfanyl-L-cysteinyl-[protein] + uridine(34) in tRNA + AH2 + ATP = 2-thiouridine(34) in tRNA + L-cysteinyl-[protein] + A + AMP + diphosphate + H(+). Functionally, catalyzes the 2-thiolation of uridine at the wobble position (U34) of tRNA, leading to the formation of s(2)U34. The polypeptide is tRNA-specific 2-thiouridylase MnmA (Sulfurimonas denitrificans (strain ATCC 33889 / DSM 1251) (Thiomicrospira denitrificans (strain ATCC 33889 / DSM 1251))).